The following is a 1828-amino-acid chain: Chromodomain-helicase-DNA-binding protein 2 (1828 aa).

Basic and acidic residues predominate over residues 1-14; it reads MMRNKDKSQEEDSS. Residues 1 to 243 form a disordered region; that stretch reads MMRNKDKSQE…EDDDFETDSD (243 aa). Low complexity predominate over residues 15–75; it reads LHSNASSHSA…SESESAGSKS (61 aa). 3 stretches are compositionally biased toward basic and acidic residues: residues 81–101, 115–128, and 146–155; these read EAKE…KMWE, SRQE…KEEA, and KKQEKWKQEP. Positions 175-204 are enriched in basic residues; it reads VKARRPVPRRTVPKPRVKKQPKTQRGKRKK. A phosphoserine mark is found at Ser-207 and Ser-208. Residues 234-243 are compositionally biased toward acidic residues; the sequence is EDDDFETDSD. Thr-240 bears the Phosphothreonine mark. Ser-242 carries the post-translational modification Phosphoserine. Chromo domains follow at residues 261-353 and 378-456; these read ETIE…QWLG and QIVE…IPTR. In terms of domain architecture, Helicase ATP-binding spans 496 to 666; the sequence is AHSWCKNNSV…WSLLHFIMPE (171 aa). Position 509–516 (509–516) interacts with ATP; sequence DEMGLGKT. A DEAH box motif is present at residues 617–620; it reads DEAH. In terms of domain architecture, Helicase C-terminal spans 795–946; sequence LLDKLLTRLR…HLVIQRMDTT (152 aa). Disordered regions lie at residues 1030–1124, 1331–1462, 1556–1638, and 1680–1828; these read EDEE…RSVR, VTGG…DEDD, HKKR…ADRG, and HMDA…VRKT. Over residues 1037–1065 the composition is skewed to basic and acidic residues; it reads ERPHKDWDEIIPEEQRKKVEEEERQKELE. Residues Ser-1085, Ser-1087, Ser-1365, and Ser-1386 each carry the phosphoserine modification. Residues 1347-1371 are compositionally biased toward basic and acidic residues; that stretch reads KKENKVPRLKEEHGIELSSPRHSDN. 2 stretches are compositionally biased toward basic and acidic residues: residues 1396–1431 and 1565–1574; these read ENKE…KSGD and EQKKKDDVTG. The segment at 1464–1566 is CHD1 helical C-terminal domain (CHCT); sequence LDQETFSICK…KKRSQEEEEQ (103 aa). The segment covering 1584–1601 has biased composition (polar residues); that stretch reads SGSSRDSLISQSHTSHNL. 4 stretches are compositionally biased toward basic and acidic residues: residues 1698–1720, 1739–1749, 1760–1772, and 1795–1814; these read RPYD…DRHH, QDFRRMSDHRP, DHYR…KLGE, and SPHD…RSLE. Position 1807 is a phosphoserine (Ser-1807).

The protein belongs to the SNF2/RAD54 helicase family. In terms of assembly, interacts with MYOD1. Interacts with histone H3.3.

The protein localises to the nucleus. The catalysed reaction is ATP + H2O = ADP + phosphate + H(+). ATP-dependent chromatin-remodeling factor that specifically binds to the promoter of target genes, leading to chromatin remodeling, possibly by promoting deposition of histone H3.3. Involved in myogenesis via interaction with MYOD1: binds to myogenic gene regulatory sequences and mediates incorporation of histone H3.3 prior to the onset of myogenic gene expression, promoting their expression. This chain is Chromodomain-helicase-DNA-binding protein 2 (CHD2), found in Homo sapiens (Human).